The primary structure comprises 356 residues: Histidinol-phosphate aminotransferase (356 aa).

The residue at position 213 (K213) is an N6-(pyridoxal phosphate)lysine.

This sequence belongs to the class-II pyridoxal-phosphate-dependent aminotransferase family. Histidinol-phosphate aminotransferase subfamily. In terms of assembly, homodimer. Pyridoxal 5'-phosphate is required as a cofactor.

The enzyme catalyses L-histidinol phosphate + 2-oxoglutarate = 3-(imidazol-4-yl)-2-oxopropyl phosphate + L-glutamate. Its pathway is amino-acid biosynthesis; L-histidine biosynthesis; L-histidine from 5-phospho-alpha-D-ribose 1-diphosphate: step 7/9. The sequence is that of Histidinol-phosphate aminotransferase from Clostridium novyi (strain NT).